Reading from the N-terminus, the 657-residue chain is Acetyl-coenzyme A synthetase (657 aa).

CoA is bound by residues 192-195 (RRGK) and Thr-311. Residues 387–389 (GEP), 411–416 (DTWWQT), Asp-504, Arg-519, and Arg-530 contribute to the ATP site. The Mg(2+) site is built by His-543 and Val-546. Arg-592 contacts CoA. Lys-617 bears the N6-acetyllysine mark.

The protein belongs to the ATP-dependent AMP-binding enzyme family. The cofactor is Mg(2+). Post-translationally, acetylated. Deacetylation by the SIR2-homolog deacetylase activates the enzyme.

It catalyses the reaction acetate + ATP + CoA = acetyl-CoA + AMP + diphosphate. Catalyzes the conversion of acetate into acetyl-CoA (AcCoA), an essential intermediate at the junction of anabolic and catabolic pathways. AcsA undergoes a two-step reaction. In the first half reaction, AcsA combines acetate with ATP to form acetyl-adenylate (AcAMP) intermediate. In the second half reaction, it can then transfer the acetyl group from AcAMP to the sulfhydryl group of CoA, forming the product AcCoA. In Campylobacter jejuni subsp. jejuni serotype O:2 (strain ATCC 700819 / NCTC 11168), this protein is Acetyl-coenzyme A synthetase.